The sequence spans 288 residues: Phosphatidate cytidylyltransferase (288 aa).

Helical transmembrane passes span 10–30, 52–72, 89–109, 118–138, 152–172, 192–212, and 223–243; these read IVLIAAVLCALFLFTPFYFAL, PLIRFFVTTFLGVFIFLWLYT, LLLINAVSWWGLALLLVISYP, NPLLQLLFAFSTLIPFVAGVL, GLFLLLYVFILVWAADSGAYF, WEGVIGGLITALVLAFIFIHF, and ITGFIILSVATVAISVLGDLT.

It belongs to the CDS family.

The protein resides in the cell inner membrane. The catalysed reaction is a 1,2-diacyl-sn-glycero-3-phosphate + CTP + H(+) = a CDP-1,2-diacyl-sn-glycerol + diphosphate. It participates in phospholipid metabolism; CDP-diacylglycerol biosynthesis; CDP-diacylglycerol from sn-glycerol 3-phosphate: step 3/3. This Haemophilus influenzae (strain ATCC 51907 / DSM 11121 / KW20 / Rd) protein is Phosphatidate cytidylyltransferase (cdsA).